A 243-amino-acid polypeptide reads, in one-letter code: Venom nerve growth factor 5 (243 aa).

A signal peptide spans 1–18 (MSMLCYTLIIAFLIGIWA). Positions 19–125 (APKSEDNVPL…TLNRNIRTKR (107 aa)) are excised as a propeptide. Positions 47-66 (GLKTSRNTDQRHPAPKKAED) are enriched in basic and acidic residues. The disordered stretch occupies residues 47–67 (GLKTSRNTDQRHPAPKKAEDQ). 3 cysteine pairs are disulfide-bonded: C139/C204, C182/C232, and C192/C234. Residue N148 is glycosylated (N-linked (GlcNAc...) asparagine).

It belongs to the NGF-beta family. Homodimer; non-covalently linked. As to expression, expressed by the venom gland.

The protein resides in the secreted. In terms of biological role, nerve growth factor is important for the development and maintenance of the sympathetic and sensory nervous systems. It stimulates division and differentiation of sympathetic and embryonic sensory neurons as well as basal forebrain cholinergic neurons in the brain. Its relevance in the snake venom is not clear. However, it has been shown to inhibit metalloproteinase-dependent proteolysis of platelet glycoprotein Ib alpha, suggesting a metalloproteinase inhibition to prevent metalloprotease autodigestion and/or protection against prey proteases. Binds a lipid between the two protein chains in the homodimer. The lipid-bound form promotes histamine relase from mouse mast cells, contrary to the lipid-free form. In Tropidechis carinatus (Australian rough-scaled snake), this protein is Venom nerve growth factor 5.